A 607-amino-acid polypeptide reads, in one-letter code: Polypeptide N-acetylgalactosaminyltransferase 18 (607 aa).

The Cytoplasmic portion of the chain corresponds to 1–12; sequence MVCTRKTKTLVS. Residues 13–35 traverse the membrane as a helical; Signal-anchor for type II membrane protein segment; that stretch reads TCVILSGMTNIICLLYVGWVTNY. At 36–607 the chain is on the lumenal side; that stretch reads IASVYVRGQE…ITNVLRSLAS (572 aa). 5 cysteine pairs are disulfide-bonded: Cys144-Cys377, Cys368-Cys447, Cys482-Cys498, Cys530-Cys543, and Cys571-Cys591. An N-linked (GlcNAc...) asparagine glycan is attached at Asn146. The catalytic subdomain A stretch occupies residues 153 to 267; sequence LPEVSIVFIF…VGWAEPVLTR (115 aa). A substrate-binding site is contributed by Asp194. Asn195 carries N-linked (GlcNAc...) asparagine glycosylation. The Mn(2+) site is built by Asp251 and His253. Asn320 carries an N-linked (GlcNAc...) asparagine glycan. The segment at 324–385 is catalytic subdomain B; sequence PIRSPALIGC…PCSRIAHIER (62 aa). Residue His382 participates in Mn(2+) binding. Residues Arg385 and Tyr390 each contribute to the substrate site. Positions 469–599 constitute a Ricin B-type lectin domain; it reads AYGVLQNSLK…KCSGQHWSIT (131 aa).

The protein belongs to the glycosyltransferase 2 family. GalNAc-T subfamily. It depends on Mn(2+) as a cofactor.

It localises to the golgi apparatus membrane. It carries out the reaction L-seryl-[protein] + UDP-N-acetyl-alpha-D-galactosamine = a 3-O-[N-acetyl-alpha-D-galactosaminyl]-L-seryl-[protein] + UDP + H(+). The catalysed reaction is L-threonyl-[protein] + UDP-N-acetyl-alpha-D-galactosamine = a 3-O-[N-acetyl-alpha-D-galactosaminyl]-L-threonyl-[protein] + UDP + H(+). The protein operates within protein modification; protein glycosylation. Its function is as follows. Catalyzes the initial reaction in O-linked oligosaccharide biosynthesis, the transfer of an N-acetyl-D-galactosamine (GalNAc) residue from UDP-GalNAc to a serine or threonine residue on the protein receptor. This is Polypeptide N-acetylgalactosaminyltransferase 18 (GALNT18) from Homo sapiens (Human).